The following is a 219-amino-acid chain: 2-C-methyl-D-erythritol 4-phosphate cytidylyltransferase (219 aa).

This sequence belongs to the IspD/TarI cytidylyltransferase family. IspD subfamily.

The enzyme catalyses 2-C-methyl-D-erythritol 4-phosphate + CTP + H(+) = 4-CDP-2-C-methyl-D-erythritol + diphosphate. It functions in the pathway isoprenoid biosynthesis; isopentenyl diphosphate biosynthesis via DXP pathway; isopentenyl diphosphate from 1-deoxy-D-xylulose 5-phosphate: step 2/6. In terms of biological role, catalyzes the formation of 4-diphosphocytidyl-2-C-methyl-D-erythritol from CTP and 2-C-methyl-D-erythritol 4-phosphate (MEP). In Endomicrobium trichonymphae, this protein is 2-C-methyl-D-erythritol 4-phosphate cytidylyltransferase.